The chain runs to 476 residues: Methylenetetrahydrofolate--tRNA-(uracil-5-)-methyltransferase TrmFO (476 aa).

An FAD-binding site is contributed by 14 to 19 (GGGLAG).

This sequence belongs to the MnmG family. TrmFO subfamily. It depends on FAD as a cofactor.

Its subcellular location is the cytoplasm. The enzyme catalyses uridine(54) in tRNA + (6R)-5,10-methylene-5,6,7,8-tetrahydrofolate + NADH + H(+) = 5-methyluridine(54) in tRNA + (6S)-5,6,7,8-tetrahydrofolate + NAD(+). The catalysed reaction is uridine(54) in tRNA + (6R)-5,10-methylene-5,6,7,8-tetrahydrofolate + NADPH + H(+) = 5-methyluridine(54) in tRNA + (6S)-5,6,7,8-tetrahydrofolate + NADP(+). In terms of biological role, catalyzes the folate-dependent formation of 5-methyl-uridine at position 54 (M-5-U54) in all tRNAs. In Brucella anthropi (strain ATCC 49188 / DSM 6882 / CCUG 24695 / JCM 21032 / LMG 3331 / NBRC 15819 / NCTC 12168 / Alc 37) (Ochrobactrum anthropi), this protein is Methylenetetrahydrofolate--tRNA-(uracil-5-)-methyltransferase TrmFO.